The chain runs to 282 residues: MALPLAFLFTSPGPVLVEIGPITIRWYGLLIATAVLIGVSLSQYLAKRRQVNPDLLSDLSIWLVIGAIPAARIYYVLFQWSEYAQHPERIIAIWQGGIAIHGAIIGGTLAALIFAKLKRVPFWQLADLVAPSLILGQAIGRWGNFFNSEAFGRPTNLPWKLYIPIERRPPDLASFEYFHPTFLYESIWDLMVFALLITLFFRSLAGKPRLKVGTLFMVYLATYSLGRLWIEGLRTDSLMLGPLRIAQVVSLTGITLGLAGLAWLYVRKRPLPDVVSSPKDTE.

4 helical membrane-spanning segments follow: residues 19–39 (IGPI…LIGV), 59–79 (LSIW…VLFQ), 90–110 (IIAI…GTLA), and 120–140 (VPFW…QAIG). Residue R141 participates in a 1,2-diacyl-sn-glycero-3-phospho-(1'-sn-glycerol) binding. Transmembrane regions (helical) follow at residues 181–201 (TFLY…TLFF), 212–232 (VGTL…WIEG), and 245–265 (IAQV…AWLY).

It belongs to the Lgt family.

The protein localises to the cell inner membrane. The enzyme catalyses L-cysteinyl-[prolipoprotein] + a 1,2-diacyl-sn-glycero-3-phospho-(1'-sn-glycerol) = an S-1,2-diacyl-sn-glyceryl-L-cysteinyl-[prolipoprotein] + sn-glycerol 1-phosphate + H(+). Its pathway is protein modification; lipoprotein biosynthesis (diacylglyceryl transfer). Its function is as follows. Catalyzes the transfer of the diacylglyceryl group from phosphatidylglycerol to the sulfhydryl group of the N-terminal cysteine of a prolipoprotein, the first step in the formation of mature lipoproteins. The sequence is that of Phosphatidylglycerol--prolipoprotein diacylglyceryl transferase from Trichormus variabilis (strain ATCC 29413 / PCC 7937) (Anabaena variabilis).